The primary structure comprises 254 residues: Nickel import ATP-binding protein NikO (254 aa).

Positions 5 to 246 constitute an ABC transporter domain; the sequence is FELQGVQFAY…TALLRRARLL (242 aa). Residue 37–44 coordinates ATP; it reads GANGSGKS.

This sequence belongs to the ABC transporter superfamily. As to quaternary structure, forms an energy-coupling factor (ECF) transporter complex composed of an ATP-binding protein (A component, NikO), a transmembrane protein (T component, NikQ) and a fused possible substrate-capture protein (S component, NikMN) of unknown stoichimetry.

Its subcellular location is the cell inner membrane. It catalyses the reaction Ni(2+)(out) + ATP + H2O = Ni(2+)(in) + ADP + phosphate + H(+). Part of the energy-coupling factor (ECF) transporter complex NikMNQO involved in nickel import. The complex confers nickel uptake upon expression in E.coli. Shows very low activity with cobalt. Presumably responsible for energy coupling to the transport system. This is Nickel import ATP-binding protein NikO from Rhodobacter capsulatus (strain ATCC BAA-309 / NBRC 16581 / SB1003).